The primary structure comprises 164 residues: Microfibrillar-associated protein 5 (164 aa).

The N-terminal stretch at 1–28 (MLFLGQKALLLVLAISIPSDWLPLGVSG) is a signal peptide. The Cell attachment site motif lies at 30-32 (RGD). N-linked (GlcNAc...) asparagine glycosylation is present at Asn70.

This sequence belongs to the MFAP family. In terms of assembly, interacts with TGFB2. Interacts with BMP2. Interacts with FBN1 (via N-terminal domain) and FBN2. Post-translationally, forms intermolecular disulfide bonds either with other MAGP-2 molecules or with other components of the microfibrils.

It localises to the secreted. It is found in the extracellular space. The protein resides in the extracellular matrix. In terms of biological role, may play a role in hematopoiesis. In the cardiovascular system, could regulate growth factors or participate in cell signaling in maintaining large vessel integrity. Component of the elastin-associated microfibrils. This chain is Microfibrillar-associated protein 5 (Mfap5), found in Mus musculus (Mouse).